Here is an 89-residue protein sequence, read N- to C-terminus: Small ribosomal subunit protein uS15 (89 aa).

It belongs to the universal ribosomal protein uS15 family. In terms of assembly, part of the 30S ribosomal subunit. Forms a bridge to the 50S subunit in the 70S ribosome, contacting the 23S rRNA.

Functionally, one of the primary rRNA binding proteins, it binds directly to 16S rRNA where it helps nucleate assembly of the platform of the 30S subunit by binding and bridging several RNA helices of the 16S rRNA. In terms of biological role, forms an intersubunit bridge (bridge B4) with the 23S rRNA of the 50S subunit in the ribosome. The protein is Small ribosomal subunit protein uS15 of Salinispora tropica (strain ATCC BAA-916 / DSM 44818 / JCM 13857 / NBRC 105044 / CNB-440).